The sequence spans 225 residues: UPF0758 protein BCQ_4241 (225 aa).

An MPN domain is found at 103-225 (SIRSPEDCAR…FVSLKEKGHI (123 aa)). His174, His176, and Asp187 together coordinate Zn(2+). A JAMM motif motif is present at residues 174 to 187 (HNHPSGDPAPSRED).

It belongs to the UPF0758 family.

The protein is UPF0758 protein BCQ_4241 of Bacillus cereus (strain Q1).